Reading from the N-terminus, the 202-residue chain is Na(+)-translocating NADH-quinone reductase subunit E (202 aa).

6 consecutive transmembrane segments (helical) span residues 4–24 (LAGL…FFLG), 35–55 (IEVA…TVPI), 81–101 (FLGL…LEMF), 114–134 (GIYL…LFMV), 144–164 (LVYG…LAGV), and 180–200 (LGIT…FSGI).

This sequence belongs to the NqrDE/RnfAE family. In terms of assembly, composed of six subunits; NqrA, NqrB, NqrC, NqrD, NqrE and NqrF.

The protein localises to the cell inner membrane. The enzyme catalyses a ubiquinone + n Na(+)(in) + NADH + H(+) = a ubiquinol + n Na(+)(out) + NAD(+). Functionally, NQR complex catalyzes the reduction of ubiquinone-1 to ubiquinol by two successive reactions, coupled with the transport of Na(+) ions from the cytoplasm to the periplasm. NqrA to NqrE are probably involved in the second step, the conversion of ubisemiquinone to ubiquinol. The polypeptide is Na(+)-translocating NADH-quinone reductase subunit E (Nitrosomonas europaea (strain ATCC 19718 / CIP 103999 / KCTC 2705 / NBRC 14298)).